We begin with the raw amino-acid sequence, 239 residues long: tRNA (guanine-N(7)-)-methyltransferase (239 aa).

S-adenosyl-L-methionine contacts are provided by Glu69, Glu94, Asp121, and Asp144. Residue Asp144 is part of the active site. Lys148 is a binding site for substrate. The interval 150–155 (RHNKRR) is interaction with RNA. Substrate contacts are provided by residues Asp180 and 217-220 (TKFE).

Belongs to the class I-like SAM-binding methyltransferase superfamily. TrmB family. Monomer.

It catalyses the reaction guanosine(46) in tRNA + S-adenosyl-L-methionine = N(7)-methylguanosine(46) in tRNA + S-adenosyl-L-homocysteine. Its pathway is tRNA modification; N(7)-methylguanine-tRNA biosynthesis. Functionally, catalyzes the formation of N(7)-methylguanine at position 46 (m7G46) in tRNA. The sequence is that of tRNA (guanine-N(7)-)-methyltransferase from Yersinia enterocolitica serotype O:8 / biotype 1B (strain NCTC 13174 / 8081).